The following is a 209-amino-acid chain: Histidine biosynthesis bifunctional protein HisIE (209 aa).

The phosphoribosyl-AMP cyclohydrolase stretch occupies residues 1-123 (MEIEKLLEQV…VLPIDYSLSI (123 aa)). Residues 124–209 (LKELEEIIKR…VMNELRRRRK (86 aa)) form a phosphoribosyl-ATP pyrophosphohydrolase region.

In the N-terminal section; belongs to the PRA-CH family. The protein in the C-terminal section; belongs to the PRA-PH family.

It localises to the cytoplasm. It catalyses the reaction 1-(5-phospho-beta-D-ribosyl)-ATP + H2O = 1-(5-phospho-beta-D-ribosyl)-5'-AMP + diphosphate + H(+). It carries out the reaction 1-(5-phospho-beta-D-ribosyl)-5'-AMP + H2O = 1-(5-phospho-beta-D-ribosyl)-5-[(5-phospho-beta-D-ribosylamino)methylideneamino]imidazole-4-carboxamide. It participates in amino-acid biosynthesis; L-histidine biosynthesis; L-histidine from 5-phospho-alpha-D-ribose 1-diphosphate: step 2/9. The protein operates within amino-acid biosynthesis; L-histidine biosynthesis; L-histidine from 5-phospho-alpha-D-ribose 1-diphosphate: step 3/9. The sequence is that of Histidine biosynthesis bifunctional protein HisIE (hisI) from Pyrococcus furiosus (strain ATCC 43587 / DSM 3638 / JCM 8422 / Vc1).